Here is a 422-residue protein sequence, read N- to C-terminus: Transcription termination factor Rho 1 (422 aa).

Residues 49–124 form the Rho RNA-BD domain; that stretch reads AAIGGGVVEI…VKAHSINFTD (76 aa). ATP is bound by residues 173–178, 185–190, and R216; these read GKGQRA and RAGKTI.

It belongs to the Rho family. Homohexamer. The homohexamer assembles into an open ring structure.

Its function is as follows. Facilitates transcription termination by a mechanism that involves Rho binding to the nascent RNA, activation of Rho's RNA-dependent ATPase activity, and release of the mRNA from the DNA template. This chain is Transcription termination factor Rho 1, found in Ehrlichia chaffeensis (strain ATCC CRL-10679 / Arkansas).